The following is a 931-amino-acid chain: Protocadherin gamma-B2 (931 aa).

The first 30 residues, 1–30, serve as a signal peptide directing secretion; that stretch reads MKASSGRCGLVRWLQVLLPFLLSLFPGALP. 6 Cadherin domains span residues 31–133, 134–242, 243–347, 348–452, 453–562, and 570–675; these read VQIR…TPLF, KQTK…PPVF, SQDV…APEV, IVTS…APVF, QQTS…APRV, and DGSA…LPDL. The Extracellular portion of the chain corresponds to 31–691; the sequence is VQIRYSIPEE…SDPQAELQFY (661 aa). N-linked (GlcNAc...) asparagine glycans are attached at residues asparagine 419 and asparagine 545. Residues 692–712 traverse the membrane as a helical segment; that stretch reads LVVALALISVLFFLAVILAIS. Topologically, residues 713-931 are cytoplasmic; sequence LRLRRSSRSD…KKKSGKKEKK (219 aa). Disordered regions lie at residues 814–840 and 901–931; these read DWRFSQAQRPGTSGSQNGDDTGTWPNN and ATLTNAAGKRDGKAPAGGNGNKKKSGKKEKK. The segment covering 815–840 has biased composition (polar residues); sequence WRFSQAQRPGTSGSQNGDDTGTWPNN. Basic residues predominate over residues 921 to 931; that stretch reads NKKKSGKKEKK.

It is found in the cell membrane. Functionally, potential calcium-dependent cell-adhesion protein. May be involved in the establishment and maintenance of specific neuronal connections in the brain. The sequence is that of Protocadherin gamma-B2 (PCDHGB2) from Pan troglodytes (Chimpanzee).